Here is a 270-residue protein sequence, read N- to C-terminus: uncharacterized protein (270 aa).

The active-site Proton donor is His171. Residue Cys261 is the Nucleophile of the active site.

Belongs to the DDAH family.

This is an uncharacterized protein from Aeropyrum pernix (strain ATCC 700893 / DSM 11879 / JCM 9820 / NBRC 100138 / K1).